A 98-amino-acid polypeptide reads, in one-letter code: NADH-ubiquinone oxidoreductase chain 4L (98 aa).

The next 3 helical transmembrane spans lie at 1-21 (MSMV…GLLM), 29-49 (SLLC…VAIL), and 61-81 (IILL…LVMV).

This sequence belongs to the complex I subunit 4L family. As to quaternary structure, core subunit of respiratory chain NADH dehydrogenase (Complex I) which is composed of 45 different subunits.

The protein resides in the mitochondrion inner membrane. The catalysed reaction is a ubiquinone + NADH + 5 H(+)(in) = a ubiquinol + NAD(+) + 4 H(+)(out). In terms of biological role, core subunit of the mitochondrial membrane respiratory chain NADH dehydrogenase (Complex I) which catalyzes electron transfer from NADH through the respiratory chain, using ubiquinone as an electron acceptor. Part of the enzyme membrane arm which is embedded in the lipid bilayer and involved in proton translocation. The sequence is that of NADH-ubiquinone oxidoreductase chain 4L (MT-ND4L) from Puma concolor (Mountain lion).